The primary structure comprises 132 residues: Replication enhancer protein (132 aa).

The protein belongs to the geminiviridae replication enhancer protein family. As to quaternary structure, homooligomer. Interacts with the replication-associated protein (REP). Interacts with host proliferating cell nuclear antigen (PCNA). Interacts with host retinoblastoma-related protein 1 (RBR1), and may thereby deregulate the host cell cycle. Oligomerization and interaction with PCNA are necessary for optimal replication enhancement.

Its function is as follows. Increases viral DNA accumulation. Enhances infectivity and symptom expression. The protein is Replication enhancer protein of Tomato mottle virus (isolate Florida) (ToMoV).